The sequence spans 227 residues: Small ribosomal subunit protein uS3m (227 aa).

Belongs to the universal ribosomal protein uS3 family. In terms of assembly, component of the mitochondrial small ribosomal subunit (mt-SSU). Mature yeast 74S mitochondrial ribosomes consist of a small (37S) and a large (54S) subunit. The 37S small subunit contains a 15S ribosomal RNA (15S mt-rRNA) and at least 32 different proteins. The 54S large subunit contains a 21S rRNA (21S mt-rRNA) and at least 45 different proteins. uS3m, uS4m and uS5m form the narrow entry site of the mRNA channel.

The protein localises to the mitochondrion. In terms of biological role, essential for mitochondrial protein synthesis and required for the maturation of small ribosomal subunits. Component of the mitochondrial ribosome (mitoribosome), a dedicated translation machinery responsible for the synthesis of mitochondrial genome-encoded proteins, including at least some of the essential transmembrane subunits of the mitochondrial respiratory chain. The mitoribosomes are attached to the mitochondrial inner membrane and translation products are cotranslationally integrated into the membrane. uS3m is essential for mitochondrial protein synthesis and required for the maturation of small ribosomal subunits. The protein is Small ribosomal subunit protein uS3m (var1) of Schizosaccharomyces pombe (strain 972 / ATCC 24843) (Fission yeast).